The chain runs to 267 residues: Inositol-1-monophosphatase (267 aa).

Mg(2+)-binding residues include Glu-66, Asp-84, Leu-86, and Asp-87. Residue Glu-66 coordinates substrate. Substrate contacts are provided by residues 86 to 89 (LDGS), Arg-182, and Asp-213. A Mg(2+)-binding site is contributed by Asp-213.

The protein belongs to the inositol monophosphatase superfamily. It depends on Mg(2+) as a cofactor.

It catalyses the reaction a myo-inositol phosphate + H2O = myo-inositol + phosphate. The protein is Inositol-1-monophosphatase (suhB) of Aeropyrum pernix (strain ATCC 700893 / DSM 11879 / JCM 9820 / NBRC 100138 / K1).